We begin with the raw amino-acid sequence, 249 residues long: Sodium channel modifier 1 (249 aa).

The Bipartite nuclear localization signal signature appears at 4 to 20; sequence KREGDDQSQLNILKKRR. A Matrin-type zinc finger spans residues 42-74; the sequence is YSCLVCSHRPVFDTVDMLVVHRKGKRHLEGMKW. Over residues 94–103 the composition is skewed to basic and acidic residues; the sequence is YVKAEDDRQE. 3 disordered regions span residues 94-116, 128-199, and 228-249; these read YVKAEDDRQEPSSSAPLLTQTRK, YSSC…PLTE, and ENVEFDSDEEEPTLLPPCSESS. The segment covering 104–115 has biased composition (polar residues); it reads PSSSAPLLTQTR. Over residues 134–149 the composition is skewed to basic and acidic residues; the sequence is KASERSESSSKEHRND. Residues 150–170 are compositionally biased toward polar residues; that stretch reads LANSHLSMRTESNDSRTTVHQ. Residues 230–239 show a composition bias toward acidic residues; the sequence is VEFDSDEEEP.

In terms of assembly, component of the minor spliceosome, which splices U12-type introns.

It is found in the nucleus. The protein resides in the nucleoplasm. Its subcellular location is the nucleus speckle. As a component of the minor spliceosome, involved in the splicing of U12-type introns in pre-mRNAs. This is Sodium channel modifier 1 (scnm1) from Danio rerio (Zebrafish).